Reading from the N-terminus, the 273-residue chain is MTVLHSIDFFSSSSAPVAIEARAPQSAFPEHHHDFYEIVIVEEGAGVHVFNGNPYTLSRGCVCFVRDHDRHLFESTDDLFLTNVLFRAPDAFRFLSGVGHFLPRECDGVYPSHWRVNGQVLQQIKCLIACLEHAPKSDQVEDIALHESVFMQLLVKLWQGCQTQAGDDQEGRLYQLLDWLQNNYSEAVEWPELADRFALPLRTLHRQLKNKTGMTPQRYLTRLRLLQARHQLCYSDNSVTDIAYLCGFGDSNHFSTLFKREFSQSPRDLRSQL.

Residues 174–272 form the HTH araC/xylS-type domain; it reads YQLLDWLQNN…SQSPRDLRSQ (99 aa). 2 DNA-binding regions (H-T-H motif) span residues 191–212 and 239–262; these read PELA…KNKT and VTDI…KREF.

Binds DNA as a dimer.

It is found in the cytoplasm. In terms of biological role, activates expression of the rhaBAD and rhaT operons. The sequence is that of HTH-type transcriptional activator RhaS from Yersinia pseudotuberculosis serotype O:1b (strain IP 31758).